Consider the following 176-residue polypeptide: Ribosome maturation factor RimM (176 aa).

The PRC barrel domain maps to 99–173; that stretch reads ADEYYWHDLL…TMTITPLEGL (75 aa).

Belongs to the RimM family. In terms of assembly, binds ribosomal protein uS19.

It localises to the cytoplasm. Its function is as follows. An accessory protein needed during the final step in the assembly of 30S ribosomal subunit, possibly for assembly of the head region. Essential for efficient processing of 16S rRNA. May be needed both before and after RbfA during the maturation of 16S rRNA. It has affinity for free ribosomal 30S subunits but not for 70S ribosomes. This is Ribosome maturation factor RimM from Trichlorobacter lovleyi (strain ATCC BAA-1151 / DSM 17278 / SZ) (Geobacter lovleyi).